The primary structure comprises 798 residues: Acetyl-CoA decarbonylase/synthase complex subunit alpha 2 (798 aa).

[4Fe-4S] cluster is bound by residues Cys65, Cys68, Cys69, Cys71, Cys76, and Cys86. Residue His109 participates in CO binding. [Ni-4Fe-4S] cluster is bound by residues His246, Cys274, and Cys313. 4Fe-4S ferredoxin-type domains lie at 395 to 424 (EEQF…IGEA) and 434 to 463 (SKLE…IDMY). Cys405, Cys408, Cys411, Cys415, Cys443, Cys446, Cys449, and Cys453 together coordinate [4Fe-4S] cluster. Residues Cys511, Cys540, and Cys575 each coordinate [Ni-4Fe-4S] cluster.

It belongs to the Ni-containing carbon monoxide dehydrogenase family. In terms of assembly, heterotetramer of two alpha and two epsilon subunits. The ACDS complex is made up of alpha, epsilon, beta, gamma and delta subunits with a probable stoichiometry of (alpha(2)epsilon(2))(4)-beta(8)-(gamma(1)delta(1))(8). The cofactor is [4Fe-4S] cluster. [Ni-4Fe-4S] cluster serves as cofactor.

The catalysed reaction is CO + 2 oxidized [2Fe-2S]-[ferredoxin] + H2O = 2 reduced [2Fe-2S]-[ferredoxin] + CO2 + 2 H(+). Its function is as follows. Part of the ACDS complex that catalyzes the reversible cleavage of acetyl-CoA, allowing autotrophic growth from CO(2). The alpha-epsilon subcomponent functions as a carbon monoxide dehydrogenase. This is Acetyl-CoA decarbonylase/synthase complex subunit alpha 2 from Archaeoglobus fulgidus (strain ATCC 49558 / DSM 4304 / JCM 9628 / NBRC 100126 / VC-16).